The following is a 183-amino-acid chain: MLVVLLTAALLAEHATIYEDSISQLSEEEQQGQDPGQLHQRPGQFPPQPSASDEEGDDDGEEDGNAPEGPPQQGGDHQKPRPPKPGNQQGPPQQEGQQQNRPPKPGNQEGPPQQEGQQQNRPPKPGNQEGPPQQEGQQQNRPPKPGNQEGPPQQEGQQQNRPPKPGNQEGPPQQGSEEQSTSL.

The N-terminal stretch at 1–14 is a signal peptide; that stretch reads MLVVLLTAALLAEH. Residues 22-183 are disordered; the sequence is ISQLSEEEQQ…QGSEEQSTSL (162 aa). Over residues 52-65 the composition is skewed to acidic residues; that stretch reads SDEEGDDDGEEDGN. 5 consecutive repeat copies span residues 81–100, 101–120, 121–140, 141–160, and 161–180. Residues 86–183 show a composition bias toward low complexity; it reads GNQQGPPQQE…QGSEEQSTSL (98 aa).

Its subcellular location is the secreted. The polypeptide is Acidic proline-rich protein HP43A (H29) (Mesocricetus auratus (Golden hamster)).